The following is a 3149-amino-acid chain: Large tegument protein deneddylase (3149 aa).

A compositionally biased stretch (polar residues) spans 1–13; it reads MSNGDWGQSQRTR. Residues 1–30 form a disordered region; that stretch reads MSNGDWGQSQRTRGTGPVRGIRTMDVNAPG. Residues 1 to 268 form a deubiquitination activity region; sequence MSNGDWGQSQ…YEANGSGFDL (268 aa). The Peptidase C76 domain occupies 41-258; that stretch reads LGTASCNQAH…MLEHYGVYDF (218 aa). Residues Cys61, Asp193, and His195 contribute to the active site. Residues 319 to 341 are disordered; it reads PAARYSPAKTNSPPSSPASAAPA. 8 consecutive repeat copies span residues 335-339, 340-344, 345-349, 350-354, 355-359, 360-364, 365-369, and 370-374. The 8 X 5 AA repeats of P-A-S-A-A stretch occupies residues 335–374; sequence PASAAPASAAPASAAPASAAPASAAPASAAPASAAPASAA. Disordered regions lie at residues 382-656, 901-923, 1143-1166, 1412-1434, 1644-1677, 2583-2839, 2852-2981, and 2995-3019; these read FIPI…GSGL, LLSG…SIYR, APIS…TPPL, GRKE…RARE, PEAT…SALW, GLVS…PTAV, AAAS…PGAR, and QTYT…KCKD. The segment covering 462–483 has biased composition (pro residues); it reads LPPPVIPIPHQSPPASPTPHPA. Low complexity-rich tracts occupy residues 509-536 and 544-564; these read AAPS…TTTL and QPPQ…QPTP. The segment at 554–584 is interaction with inner tegument protein; sequence SPLLPQQQPTPSAAPAPSPLLPQQQPPPSAA. Residues 565-609 are compositionally biased toward pro residues; that stretch reads SAAPAPSPLLPQQQPPPSAARAPSPLPPQQQPLPSATPAPPPAQQ. The span at 1143-1155 shows a compositional bias: low complexity; sequence APISPASPSATPA. Over residues 2592–2603 the composition is skewed to polar residues; sequence SADNTPASSDRL. The segment covering 2711 to 2720 has biased composition (pro residues); the sequence is QPAPQQPPSS. 2 stretches are compositionally biased toward polar residues: residues 2734 to 2745 and 2784 to 2804; these read SPHSTPSTASGS and SAAS…SSQD. Residues 2812-2827 are compositionally biased toward basic and acidic residues; sequence MQREKKQQGGREEAAE. A compositionally biased stretch (low complexity) spans 2874-2885; that stretch reads APALGSGLAAPA.

It belongs to the herpesviridae large tegument protein family. As to quaternary structure, interacts with host CUL1 and CUL4A; these interactions inhibit the E3 ligase activity of cullins. Interacts with inner tegument protein. Interacts with capsid vertex specific component CVC2. Interacts with the major capsid protein/MCP. Interacts with host TRIM25 and YWHAZ.

The protein resides in the virion tegument. The protein localises to the host cytoplasm. It is found in the host nucleus. It catalyses the reaction Thiol-dependent hydrolysis of ester, thioester, amide, peptide and isopeptide bonds formed by the C-terminal Gly of ubiquitin (a 76-residue protein attached to proteins as an intracellular targeting signal).. In terms of biological role, large tegument protein that plays multiple roles in the viral cycle. During viral entry, remains associated with the capsid while most of the tegument is detached and participates in the capsid transport toward the host nucleus. Plays a role in the routing of the capsid at the nuclear pore complex and subsequent uncoating. Within the host nucleus, acts as a deneddylase and promotes the degradation of nuclear CRLs (cullin-RING ubiquitin ligases) and thereby stabilizes nuclear CRL substrates, while cytoplasmic CRLs remain unaffected. These modifications prevent host cell cycle S-phase progression and create a favorable environment allowing efficient viral genome replication. Participates later in the secondary envelopment of capsids. Indeed, plays a linker role for the association of the outer viral tegument to the capsids together with the inner tegument protein. Counteracts host TLR-mediated NF-kappa-B activation through both MYD88 and TICAM1-dependent pathways by interfering with 'Lys-63'- and 'Lys-48'-linked ubiquitination of signaling intermediates such as TRAF6 and IKBKG. Inhibits type I interferon production by forming a tri-molecular complex with host TRIM25 and 14-3-3 thereby promoting TRIM25 autoubiquitination and sequestration of the ligase into inactive protein aggregates. In turn, host RIGI is recruited to the complex but ubiquitination is severely impaired leading to inhibition of the pathway. Also catalyzes the removal of 'Lys-48'- and 'Lys-63'-linked ubiquitin chains on host TBK1 and STING1 suppressing cGAS-STING signaling in addition to the RIGI-MAVS pathway. Inhibits selective autophagy by deubiquitinating host SQSTM1. In turn, decreased SQSTM1 ubiquitination fails to recruit LC3 to SQSTM1-positive aggregates. In the host nucleus, deubiquitinates topoisomerase II subunits TOP2A and TOP2B thereby stabilizing SUMOylated TOP2 which halts the DNA damage response to TOP2-induced double strand DNA breaks and promotes cell survival. The sequence is that of Large tegument protein deneddylase from Epstein-Barr virus (strain B95-8) (HHV-4).